A 70-amino-acid polypeptide reads, in one-letter code: Antimicrobial peptide VpCT1 (70 aa).

A signal peptide spans 1 to 23; it reads MKNQFAVLLVALVLLQLFSQSEA. At L36 the chain carries Leucine amide. Residues 37–70 constitute a propeptide that is removed on maturation; it reads GKRGLRNFDLEQMDDTYEPELSEADLRYLQDLLR.

Belongs to the non-disulfide-bridged peptide (NDBP) superfamily. Short antimicrobial peptide (group 4) family. As to expression, expressed by the venom gland.

It is found in the secreted. The protein resides in the target cell membrane. In terms of biological role, antimicrobial peptide with potent activity against bacteria S.aureus (MIC=4.7 uM) and E.coli (MIC=31.5 uM), and pathogenic yeasts C.albicans (MIC=25 uM) and C.glabrata (MIC=12.5 uM). Is not very effective against P.aeruginosa (MIC=150 and &gt;300 uM). Also provokes moderate hemolysis on human erythrocytes (HC(50)=10.5 uM). In Mesomexovis punctatus (Scorpion), this protein is Antimicrobial peptide VpCT1.